Reading from the N-terminus, the 442-residue chain is Cytokine receptor-like factor 3 (442 aa).

Residues 10–46 (EVLLQEARENVEAAQSYRRELGQRLQGLREAQRQIKE) are a coiled coil. The region spanning 181–274 (PPVQIEELIE…PQTGHSTLVP (94 aa)) is the Fibronectin type-III domain.

It belongs to the cytokine receptor-like factor 3 family.

It is found in the cytoplasm. Functionally, may play a role in the negative regulation of cell cycle progression. The polypeptide is Cytokine receptor-like factor 3 (Crlf3) (Mus musculus (Mouse)).